We begin with the raw amino-acid sequence, 357 residues long: Protein BIG GRAIN 1-like A (357 aa).

2 disordered regions span residues 1–146 and 208–233; these read MEIT…KELG and SSTC…GKSK. The span at 75-87 shows a compositional bias: basic and acidic residues; that stretch reads DFERSRRKTDFLR. 2 stretches are compositionally biased toward low complexity: residues 88-104 and 112-127; these read HSNS…SSES and KSSA…QPKP. The span at 129 to 139 shows a compositional bias: polar residues; it reads RTSSVDHSSAV. Low complexity predominate over residues 208–223; that stretch reads SSTCSSASSFSRSCLS.

The protein belongs to the BIG GRAIN 1 (BG1) plant protein family.

The protein resides in the cell membrane. Its function is as follows. Involved in auxin transport. Regulator of the auxin signaling pathway. The polypeptide is Protein BIG GRAIN 1-like A (Arabidopsis thaliana (Mouse-ear cress)).